We begin with the raw amino-acid sequence, 493 residues long: Lysine--tRNA ligase (493 aa).

Positions 404 and 411 each coordinate Mg(2+).

This sequence belongs to the class-II aminoacyl-tRNA synthetase family. Homodimer. The cofactor is Mg(2+).

It localises to the cytoplasm. It carries out the reaction tRNA(Lys) + L-lysine + ATP = L-lysyl-tRNA(Lys) + AMP + diphosphate. This Oceanobacillus iheyensis (strain DSM 14371 / CIP 107618 / JCM 11309 / KCTC 3954 / HTE831) protein is Lysine--tRNA ligase.